The chain runs to 563 residues: Dihydroxy-acid dehydratase (563 aa).

D79 lines the Mg(2+) pocket. Residue C120 participates in [2Fe-2S] cluster binding. Mg(2+) contacts are provided by D121 and K122. The residue at position 122 (K122) is an N6-carboxylysine. [2Fe-2S] cluster is bound at residue C193. A Mg(2+)-binding site is contributed by E451. S477 functions as the Proton acceptor in the catalytic mechanism.

Belongs to the IlvD/Edd family. In terms of assembly, homodimer. It depends on [2Fe-2S] cluster as a cofactor. Mg(2+) is required as a cofactor.

The catalysed reaction is (2R)-2,3-dihydroxy-3-methylbutanoate = 3-methyl-2-oxobutanoate + H2O. The enzyme catalyses (2R,3R)-2,3-dihydroxy-3-methylpentanoate = (S)-3-methyl-2-oxopentanoate + H2O. The protein operates within amino-acid biosynthesis; L-isoleucine biosynthesis; L-isoleucine from 2-oxobutanoate: step 3/4. It functions in the pathway amino-acid biosynthesis; L-valine biosynthesis; L-valine from pyruvate: step 3/4. Its function is as follows. Functions in the biosynthesis of branched-chain amino acids. Catalyzes the dehydration of (2R,3R)-2,3-dihydroxy-3-methylpentanoate (2,3-dihydroxy-3-methylvalerate) into 2-oxo-3-methylpentanoate (2-oxo-3-methylvalerate) and of (2R)-2,3-dihydroxy-3-methylbutanoate (2,3-dihydroxyisovalerate) into 2-oxo-3-methylbutanoate (2-oxoisovalerate), the penultimate precursor to L-isoleucine and L-valine, respectively. The protein is Dihydroxy-acid dehydratase of Sulfurovum sp. (strain NBC37-1).